A 262-amino-acid chain; its full sequence is Nurim (262 aa).

The Nuclear portion of the chain corresponds to 1-4; the sequence is MAPA. The chain crosses the membrane as a helical span at residues 5-28; sequence LLLIPAALASFILAFGTGVEFVRF. The Perinuclear space segment spans residues 29–58; it reads TSLRPLLGGIPESGGPDARQGWLAALQDRS. A helical membrane pass occupies residues 59–80; the sequence is ILAPLAWDLGLLLLFVGQHSLM. At 81–97 the chain is on the nuclear side; that stretch reads AAERVKAWTSRYFGVLQ. A helical transmembrane segment spans residues 98–114; that stretch reads RSLYVACTALALQLVMR. The Perinuclear space segment spans residues 115–133; that stretch reads YWEPIPKGPVLWEARAEPW. A helical membrane pass occupies residues 134 to 164; it reads ATWVPLLCFVLHVISWLLIFSILLVFDYAEL. Over 165 to 191 the chain is Nuclear; it reads MGLKQVYYHVLGLGEPLALKSPRALRL. Residues 192 to 210 traverse the membrane as a helical segment; the sequence is FSHLRHPVCVELLTVLWVV. Residues 211–216 are Perinuclear space-facing; it reads PTLGTD. Residues 217-234 traverse the membrane as a helical segment; it reads RLLLAFLLTLYLGLAHGL. At 235–262 the chain is on the nuclear side; the sequence is DQQDLRYLRAQLQRKLHLLSRPQDGEAE.

This sequence belongs to the nurim family.

The protein localises to the nucleus inner membrane. The protein is Nurim (NRM) of Homo sapiens (Human).